A 261-amino-acid polypeptide reads, in one-letter code: Phosphate import ATP-binding protein PstB (261 aa).

Residues 15 to 256 (LQVRRLNFYY…PAHQETENYI (242 aa)) form the ABC transporter domain. 47–54 (GPSGCGKS) lines the ATP pocket.

The protein belongs to the ABC transporter superfamily. Phosphate importer (TC 3.A.1.7) family. The complex is composed of two ATP-binding proteins (PstB), two transmembrane proteins (PstC and PstA) and a solute-binding protein (PstS).

It localises to the cell inner membrane. The catalysed reaction is phosphate(out) + ATP + H2O = ADP + 2 phosphate(in) + H(+). Part of the ABC transporter complex PstSACB involved in phosphate import. Responsible for energy coupling to the transport system. The protein is Phosphate import ATP-binding protein PstB of Burkholderia sp.